A 218-amino-acid polypeptide reads, in one-letter code: Cytochrome b6 (218 aa).

A helical membrane pass occupies residues 35-55 (IFYCLGGITLVCFLIQFATGF). Heme c is bound at residue Cys-38. Heme b contacts are provided by His-89 and His-103. A run of 3 helical transmembrane segments spans residues 93–113 (ASMM…TGGF), 119–139 (LTWV…VTGY), and 189–209 (LHTF…FLMI). Heme b contacts are provided by His-190 and His-205.

Belongs to the cytochrome b family. PetB subfamily. In terms of assembly, the 4 large subunits of the cytochrome b6-f complex are cytochrome b6, subunit IV (17 kDa polypeptide, PetD), cytochrome f and the Rieske protein, while the 4 small subunits are PetG, PetL, PetM and PetN. The complex functions as a dimer. The cofactor is heme b. Requires heme c as cofactor.

Its subcellular location is the cellular thylakoid membrane. Functionally, component of the cytochrome b6-f complex, which mediates electron transfer between photosystem II (PSII) and photosystem I (PSI), cyclic electron flow around PSI, and state transitions. The sequence is that of Cytochrome b6 from Prochlorococcus marinus (strain MIT 9301).